The chain runs to 93 residues: CRISPR-associated endoribonuclease Cas2 (93 aa).

Asp13 is a Mg(2+) binding site.

It belongs to the CRISPR-associated endoribonuclease Cas2 protein family. As to quaternary structure, homodimer, forms a heterotetramer with a Cas1 homodimer. Mg(2+) is required as a cofactor.

Functionally, CRISPR (clustered regularly interspaced short palindromic repeat), is an adaptive immune system that provides protection against mobile genetic elements (viruses, transposable elements and conjugative plasmids). CRISPR clusters contain sequences complementary to antecedent mobile elements and target invading nucleic acids. CRISPR clusters are transcribed and processed into CRISPR RNA (crRNA). Functions as a ssRNA-specific endoribonuclease. Involved in the integration of spacer DNA into the CRISPR cassette. The chain is CRISPR-associated endoribonuclease Cas2 from Korarchaeum cryptofilum (strain OPF8).